Here is a 356-residue protein sequence, read N- to C-terminus: Nicotinate-nucleotide--dimethylbenzimidazole phosphoribosyltransferase (356 aa).

E317 acts as the Proton acceptor in catalysis.

Belongs to the CobT family. Homodimer.

It carries out the reaction 5,6-dimethylbenzimidazole + nicotinate beta-D-ribonucleotide = alpha-ribazole 5'-phosphate + nicotinate + H(+). Its pathway is nucleoside biosynthesis; alpha-ribazole biosynthesis; alpha-ribazole from 5,6-dimethylbenzimidazole: step 1/2. In terms of biological role, catalyzes the synthesis of alpha-ribazole-5'-phosphate from nicotinate mononucleotide (NAMN) and 5,6-dimethylbenzimidazole (DMB). The sequence is that of Nicotinate-nucleotide--dimethylbenzimidazole phosphoribosyltransferase from Salmonella paratyphi A (strain AKU_12601).